A 357-amino-acid chain; its full sequence is Probable dual-specificity RNA methyltransferase RlmN (357 aa).

Glu-95 serves as the catalytic Proton acceptor. Residues 106-340 (NRDRHTVCVS…VSVREEKGTD (235 aa)) form the Radical SAM core domain. A disulfide bridge connects residues Cys-113 and Cys-345. [4Fe-4S] cluster is bound by residues Cys-120, Cys-124, and Cys-127. S-adenosyl-L-methionine-binding positions include 172–173 (GE), Ser-204, 227–229 (SLH), and Asn-302. The S-methylcysteine intermediate role is filled by Cys-345.

This sequence belongs to the radical SAM superfamily. RlmN family. [4Fe-4S] cluster serves as cofactor.

The protein resides in the cytoplasm. It carries out the reaction adenosine(2503) in 23S rRNA + 2 reduced [2Fe-2S]-[ferredoxin] + 2 S-adenosyl-L-methionine = 2-methyladenosine(2503) in 23S rRNA + 5'-deoxyadenosine + L-methionine + 2 oxidized [2Fe-2S]-[ferredoxin] + S-adenosyl-L-homocysteine. The enzyme catalyses adenosine(37) in tRNA + 2 reduced [2Fe-2S]-[ferredoxin] + 2 S-adenosyl-L-methionine = 2-methyladenosine(37) in tRNA + 5'-deoxyadenosine + L-methionine + 2 oxidized [2Fe-2S]-[ferredoxin] + S-adenosyl-L-homocysteine. Functionally, specifically methylates position 2 of adenine 2503 in 23S rRNA and position 2 of adenine 37 in tRNAs. This is Probable dual-specificity RNA methyltransferase RlmN from Desulfitobacterium hafniense (strain Y51).